The sequence spans 71 residues: Sperm-associated antigen 11A (71 aa).

The N-terminal stretch at 1 to 19 (MIPRLLPFFASLLFAALLF) is a signal peptide. 3 disulfide bridges follow: Cys-32/Cys-61, Cys-39/Cys-54, and Cys-44/Cys-62.

The protein belongs to the beta-defensin family.

It is found in the secreted. Has antimicrobial activity against E.coli. Plays a role in the defense response in the male reproductive tract, contributing to sperm maturation, storage and protection. The sequence is that of Sperm-associated antigen 11A from Mus musculus (Mouse).